The chain runs to 165 residues: Phosphopantetheine adenylyltransferase (165 aa).

Thr-9 lines the substrate pocket. Residues 9-10 (TF) and His-17 each bind ATP. Residues Lys-41, Leu-73, and Arg-87 each contribute to the substrate site. ATP contacts are provided by residues 88–90 (GLR), Glu-98, and 123–129 (YQFISGT).

This sequence belongs to the bacterial CoaD family. As to quaternary structure, homohexamer. Mg(2+) serves as cofactor.

It is found in the cytoplasm. It carries out the reaction (R)-4'-phosphopantetheine + ATP + H(+) = 3'-dephospho-CoA + diphosphate. Its pathway is cofactor biosynthesis; coenzyme A biosynthesis; CoA from (R)-pantothenate: step 4/5. Functionally, reversibly transfers an adenylyl group from ATP to 4'-phosphopantetheine, yielding dephospho-CoA (dPCoA) and pyrophosphate. The chain is Phosphopantetheine adenylyltransferase from Polynucleobacter necessarius subsp. necessarius (strain STIR1).